Here is a 165-residue protein sequence, read N- to C-terminus: Nucleotide-binding protein MXAN_1478 (165 aa).

Belongs to the YajQ family.

Its function is as follows. Nucleotide-binding protein. This chain is Nucleotide-binding protein MXAN_1478, found in Myxococcus xanthus (strain DK1622).